The sequence spans 339 residues: Glycerol-3-phosphate dehydrogenase [NAD(P)+] (339 aa).

NADPH contacts are provided by S14, Y15, H35, and K109. The sn-glycerol 3-phosphate site is built by K109, G138, and T140. A142 lines the NADPH pocket. Residues K194, D247, S257, R258, and N259 each coordinate sn-glycerol 3-phosphate. K194 serves as the catalytic Proton acceptor. An NADPH-binding site is contributed by R258. Positions 282 and 284 each coordinate NADPH.

It belongs to the NAD-dependent glycerol-3-phosphate dehydrogenase family.

It is found in the cytoplasm. It carries out the reaction sn-glycerol 3-phosphate + NAD(+) = dihydroxyacetone phosphate + NADH + H(+). The enzyme catalyses sn-glycerol 3-phosphate + NADP(+) = dihydroxyacetone phosphate + NADPH + H(+). The protein operates within membrane lipid metabolism; glycerophospholipid metabolism. Its function is as follows. Catalyzes the reduction of the glycolytic intermediate dihydroxyacetone phosphate (DHAP) to sn-glycerol 3-phosphate (G3P), the key precursor for phospholipid synthesis. This is Glycerol-3-phosphate dehydrogenase [NAD(P)+] from Shewanella amazonensis (strain ATCC BAA-1098 / SB2B).